The primary structure comprises 226 residues: Tyramine N-feruloyltransferase 10/30 (226 aa).

The interval 29-45 (HIYKLFYQIHEYHNYTH) is important in binding site and for catalytic activity. The region spanning 72–222 (VLLLEVSPTP…VGDALQKYAD (151 aa)) is the N-acetyltransferase domain.

The protein belongs to the acetyltransferase family. As to quaternary structure, homodimer.

The protein localises to the cytoplasm. The enzyme catalyses tyramine + (E)-feruloyl-CoA = N-[(E)-feruloyl]tyramine + CoA + H(+). Inhibited by (2-hydroxyphenyl)amino sulfinyl acetic acid 1,1-dimethylethyl ester, by DEPC and by N-ethylmaleimide. Its function is as follows. Synthesizes amides which are involved in stress response in the cell wall. Catalyzes the synthesis of hydroxycinnamic acid amides from hydroxycinnamoyl-CoA thioesters and various hydroxyphenylethylamines such as 4-coumaroyl-CoA and sinapoyl-CoA. The protein is Tyramine N-feruloyltransferase 10/30 (THT10) of Nicotiana tabacum (Common tobacco).